The chain runs to 330 residues: MKILVTGGGGFLGQALCRGLVERGHQVLAFNRSHYPELQVMGVGQIRGDLADPQAVLHAVAGVDAVFHNGAKAGAWGSYDSYHQANVIGTDNVIAACRAHGIGRLVYTSTPSVTHRATHPVEGLGADEVPYGEDFQAPYAATKAIAEQRVLAANDASLATVALRPRLIWGPGDQQLVPRLAERARQGRLRLVGDGSNKVDTTYIDNAALAHFLAFEALAPGAACAGKAYFISNGEPLPMRELVNQLLAAVGAPRVDKAISFKTAYRIGAICERLWPLLRLRGEPPLTRFLAEQLCTPHWYSMEPARRDFGYVPQVSIEEGLRRLKASSAA.

Catalysis depends on Tyr139, which acts as the Proton acceptor. Position 143 (Lys143) interacts with NADP(+).

This sequence belongs to the 3-beta-HSD family. In terms of assembly, homodimer.

It carries out the reaction a (2R,3S)-2-alkyl-3-hydroxyalkanoate + NADP(+) = an (R)-2-alkyl-3-oxoalkanoate + NADPH + H(+). In terms of biological role, involved in olefin biosynthesis. Catalyzes the reversible stereospecific NADPH-dependent reduction of 2-alkyl-3-oxoalkanoic acids to 2-alkyl-3-hydroxyalkanoic acids. In the oxidative direction, syn-2-decyl-3-hydroxytetradecanoic acid is the preferred substrate. In the reductive direction, (2R/S)-2-hexyl-3-ketodecanoic acid is accepted as substrate. This is 2-alkyl-3-oxoalkanoate reductase from Stenotrophomonas maltophilia (strain K279a).